A 237-amino-acid polypeptide reads, in one-letter code: DCN1-like protein 5 (237 aa).

Serine 9, serine 41, and serine 48 each carry phosphoserine. Positions 46–232 constitute a DCUN1 domain; that stretch reads FSSKKCLAWF…LLDEFVEWQK (187 aa).

As to quaternary structure, part of a complex that contains DCUN1D5, CUL1 and RBX1; this interaction is bridged by CUL1. Interacts (via the DCUN1 domain) with the unneddylated cullins: interacts with CUL1, CUL2, CUL3, CUL4A, CUL4B and CUL5; these interactions promote the cullin neddylation and the identity of the cullin dictates the affinity of the interaction. Interacts (via DCUN1 domain) with UBE2M (N-terminally acetylated form) and probably with UBE2F (N-terminally acetylated form). May also interact with regulators or subunits of cullin-RING ligases such as RBX1, RNF7, ELOB and DDB1; these interactions are bridged by cullins. Interacts with CAND1; this interaction is bridged by cullins and strongly inhibits the neddylation of cullins. These CAND-cullin-DCNL complexes can only be neddylated in the presence of a substrate adapter. Phosphorylation at Ser-41 is independent of cullin's interaction. Phosphorylated in response to both TICAM1 and MYD88 dependent Toll-like receptor (TLR) pathway activation. Phosphorylated in response to IL1B stimulation.

The protein localises to the nucleus. Its subcellular location is the cytoplasm. It is found in the cytoskeleton. The protein resides in the spindle. Functionally, contributes to the neddylation of all cullins by transferring NEDD8 from N-terminally acetylated NEDD8-conjugating E2s enzyme to different cullin C-terminal domain-RBX complexes which is necessary for the activation of cullin-RING E3 ubiquitin ligases (CRLs). May play a role in DNA damage response and may participate in cell proliferation and anchorage-independent cell growth. In Pongo abelii (Sumatran orangutan), this protein is DCN1-like protein 5.